The chain runs to 94 residues: Scorpine (94 aa).

The signal sequence occupies residues 1 to 19 (MNSKLTALIFLGLIAIAYC). Positions 55-94 (EFQCMANMDMLGNCEKHCQTSGEKGYCHGTKCKCGTPLSY) constitute a BetaSPN-type CS-alpha/beta domain. Cystine bridges form between Cys-58–Cys-81, Cys-68–Cys-86, and Cys-72–Cys-88.

The protein belongs to the long chain scorpion toxin family. Class 3 subfamily. In terms of tissue distribution, expressed by the venom gland.

It is found in the secreted. The protein localises to the target cell membrane. In terms of biological role, this full-length protein shows antibacterial activity against B.subtilis and K.pneumoniae. Also shows a potent inhibitory effect on the ookinete (ED(50) 0.7 uM) and gamete (ED(50) 10 uM) stages of Plasmodium berghei development. In addition, induces cell membrane disruption, leakage currents and cell death on HEK293 cell line (tested at 25 uM). The polypeptide is Scorpine (Pandinus imperator (Emperor scorpion)).